The following is a 433-amino-acid chain: Putative ankyrin repeat protein R578 (433 aa).

4 ANK repeats span residues 166–195, 197–224, 356–386, and 388–415; these read NKEI…ILSE, DHLI…LSKL, VNPN…DIHS, and PSLI…ICDE.

The protein is Putative ankyrin repeat protein R578 of Acanthamoeba polyphaga mimivirus (APMV).